The chain runs to 889 residues: Protein SEY1 homolog (889 aa).

Residues 1 to 801 (MDTKTQIIDY…ETGAKMSLKN (801 aa)) are Cytoplasmic-facing. Residues 31–277 (GFNYNVIAIL…IPSDGFAHYC (247 aa)) form the GB1/RHD3-type G domain. 41 to 48 (GSQSSGKS) serves as a coordination point for GTP. Residues 429–449 (RKDGKGGSSPSAGDKKDTKDT) form a disordered region. Residues 679-699 (LDEIMDVLKSKLDEISDNLSS) adopt a coiled-coil conformation. Residues 802–822 (VPLFFWVILLILGWNELLFFT) traverse the membrane as a helical segment. Residues 823–825 (RFF) lie on the Lumenal side of the membrane. Residues 826 to 846 (FRLNIILPLFLAAAVILSTLV) traverse the membrane as a helical segment. The Cytoplasmic portion of the chain corresponds to 847-889 (FNGNMEVLSIINKAVFFLAKNSFGVYRQLQAMGGKAAQGAAAD).

It belongs to the TRAFAC class dynamin-like GTPase superfamily. GB1/RHD3 GTPase family. RHD3 subfamily.

The protein resides in the endoplasmic reticulum membrane. Its function is as follows. Probable GTP-binding protein involved in generating and maintaining the structure of the tubular endoplasmic reticulum network. This is Protein SEY1 homolog from Plasmodium vivax (strain Salvador I).